The chain runs to 845 residues: Extended synaptotagmin-2 (845 aa).

Gly residues predominate over residues 1–17; that stretch reads MSSAGGEGPEAGPGRAG. Residues 1–26 form a disordered region; sequence MSSAGGEGPEAGPGRAGGRSEPEAPG. Residues 1–27 lie on the Cytoplasmic side of the membrane; the sequence is MSSAGGEGPEAGPGRAGGRSEPEAPGS. The helical transmembrane segment at 28–48 threads the bilayer; the sequence is ALSVDLPGLLGQLARSFALLL. The Lumenal portion of the chain corresponds to 49–51; sequence PVY. Residues 52–72 form a helical membrane-spanning segment; that stretch reads ALGYLGLSFSWVLLALGLLAW. Over 73 to 845 the chain is Cytoplasmic; the sequence is CRRSRGLKAS…EDGTRPQVIT (773 aa). Residues 115–294 form the SMP-LTD domain; it reads DTERAEWLNK…LPNRITVPLV (180 aa). 2 consecutive C2 domains span residues 293–413 and 442–563; these read LVSE…DEWF and VLAD…QLSN. The Ca(2+) site is built by Lys324, Asp325, Asp337, Asp384, Glu385, Asp386, Asp388, Asp390, and Asp391. Residues 584–664 form a disordered region; that stretch reads QERPPDYQHS…RDLGRSSSSL (81 aa). Residues 612–628 show a composition bias toward polar residues; the sequence is SQMSASPGTGGANTAPS. A phosphoserine mark is found at Ser615 and Ser617. A Phosphothreonine modification is found at Thr629. A compositionally biased stretch (basic and acidic residues) spans 634–645; the sequence is VDDKPAMEEKPQ. Ser660, Ser662, Ser663, Ser667, Ser679, Ser682, and Ser685 each carry phosphoserine. Residues 710 to 832 form the C2 3 domain; it reads PLGQIQLTIR…ELAKGWTQWY (123 aa). The tract at residues 757–764 is required for phosphatidylinositol 4,5-bisphosphate-dependent location at the cell membrane; that stretch reads KRRSGRRK.

The protein belongs to the extended synaptotagmin family. In terms of assembly, homodimer. Interacts with ESYT1 and ESYT3. Interacts with FGFR1 that has been activated by FGF1 binding. Interacts with the AP-2 complex; identified in a complex with the AP-2 complex and FGFR1.

The protein localises to the cell membrane. It localises to the endoplasmic reticulum membrane. Tethers the endoplasmic reticulum to the cell membrane and promotes the formation of appositions between the endoplasmic reticulum and the cell membrane. Binds glycerophospholipids in a barrel-like domain and may play a role in cellular lipid transport. Plays a role in FGF signaling via its role in the rapid internalization of FGFR1 that has been activated by FGF1 binding; this occurs most likely via the AP-2 complex. Promotes the localization of SACM1L at endoplasmic reticulum-plasma membrane contact sites (EPCS). The polypeptide is Extended synaptotagmin-2 (Esyt2) (Mus musculus (Mouse)).